A 456-amino-acid polypeptide reads, in one-letter code: Armadillo repeat-containing X-linked protein 1 (456 aa).

At 1–6 (MGRTRE) the chain is on the mitochondrial intermembrane side. Mitochondrion outer membrane (MOM)-targeting sequence regions lie at residues 1–6 (MGRTRE) and 26–36 (RLTWGKDENEK). A helical; Signal-anchor membrane pass occupies residues 7–29 (AGCVAAGMVIGAGACYCVYRLTW). Residues 30–456 (GKDENEKLWD…VKVLKVLTKL (427 aa)) lie on the Cytoplasmic side of the membrane. Disordered regions lie at residues 37–106 (LWDE…SGGG) and 139–186 (RTLT…APAT). Residues 38–50 (WDEEEEEEEEEEE) show a composition bias toward acidic residues. 2 stretches are compositionally biased toward basic and acidic residues: residues 51–62 (KSCSDKTEKELK) and 72–81 (KPQDDSKSKV). Residues 162–180 (SRARNRTSGKVKRKNRSKS) are compositionally biased toward basic residues. ARM repeat units lie at residues 198-238 (PYKI…NNAA), 240-279 (SFNQNAIRELGGVPIIAKLIKTRDPIIREKTYNALNNLSV), 361-401 (PAMT…NIND), and 418-456 (SSLFFLFKESGVCVKKIKALASHKDLVVKVKVLKVLTKL).

This sequence belongs to the eutherian X-chromosome-specific Armcx family. Interacts with MIRO1. Widely expressed in the adult nervous tissue, especially in the forebrain, including the cerebral cortex, hippocampus and thalamus.

Its subcellular location is the mitochondrion. It is found in the mitochondrion outer membrane. Regulates mitochondrial transport during axon regeneration. Increases the proportion of motile mitochondria by recruiting stationary mitochondria into the motile pool. Enhances mitochondria movement and neurite growth in both adult axons and embryonic neurons. Promotes neuronal survival and axon regeneration after nerve injury. May link mitochondria to the Trak1-kinesin motor complex via its interaction with Miro1. This Mus musculus (Mouse) protein is Armadillo repeat-containing X-linked protein 1 (Armcx1).